The sequence spans 179 residues: CASP-like protein 1F1 (179 aa).

At 1 to 16 (MENVEDKYNSPLKSQK) the chain is on the cytoplasmic side. The helical transmembrane segment at 17–37 (LFIGAQICLRIVTIGATLAAT) threads the bilayer. At 38 to 65 (WIMVTDKQSITFGDFVMVAKYNYSSAFK) the chain is on the extracellular side. Residue asparagine 59 is glycosylated (N-linked (GlcNAc...) asparagine). A helical membrane pass occupies residues 66 to 86 (FFVLANVIACACSVVSLLFLC). The Cytoplasmic segment spans residues 87–105 (ALGRYSSNPGHVFLLFLHD). A helical membrane pass occupies residues 106 to 126 (LLMMSLVLAGCSAATAIGFLG). Residues 127–150 (KYGNTKSGWMPICDQFGQFCNRGT) lie on the Extracellular side of the membrane. The chain crosses the membrane as a helical span at residues 151–171 (ISMMLSYLSMVCLLILTVTSA). Residues 172–179 (NKSRQIHV) are Cytoplasmic-facing.

It belongs to the Casparian strip membrane proteins (CASP) family. Homodimer and heterodimers.

It localises to the cell membrane. The polypeptide is CASP-like protein 1F1 (Ricinus communis (Castor bean)).